We begin with the raw amino-acid sequence, 511 residues long: uncharacterized protein (511 aa).

The CoA carboxyltransferase N-terminal domain occupies 2–254 (LMDYEKERTE…NFQEKAPIHE (253 aa)). A carboxyltransferase region spans residues 2–506 (LMDYEKERTE…KEMTFTNRKH (505 aa)). The region spanning 260–506 (HFETPLADVI…KEMTFTNRKH (247 aa)) is the CoA carboxyltransferase C-terminal domain.

Belongs to the AccD/PCCB family.

This is an uncharacterized protein from Bacillus subtilis (strain 168).